The primary structure comprises 855 residues: Putative AAA family ATPase R476 (855 aa).

Residues 1–13 are compositionally biased toward basic and acidic residues; that stretch reads MNKRDFSELKNSE. The interval 1 to 37 is disordered; sequence MNKRDFSELKNSESSEESSLVSSTETVRSSKRNKKFH. Residues 17–27 show a composition bias toward low complexity; it reads ESSLVSSTETV. 610–617 is a binding site for ATP; the sequence is GPPGTGKT.

The protein belongs to the AAA ATPase family.

In Acanthamoeba polyphaga mimivirus (APMV), this protein is Putative AAA family ATPase R476.